The chain runs to 129 residues: Small ribosomal subunit protein uS11 (129 aa).

It belongs to the universal ribosomal protein uS11 family. As to quaternary structure, part of the 30S ribosomal subunit. Interacts with proteins S7 and S18. Binds to IF-3.

Its function is as follows. Located on the platform of the 30S subunit, it bridges several disparate RNA helices of the 16S rRNA. Forms part of the Shine-Dalgarno cleft in the 70S ribosome. This chain is Small ribosomal subunit protein uS11, found in Limosilactobacillus reuteri (strain DSM 20016) (Lactobacillus reuteri).